The primary structure comprises 2207 residues: Genome polyprotein (2207 aa).

G2 carries N-myristoyl glycine; by host lipidation. Residues 2-1518 are Cytoplasmic-facing; the sequence is GAQVSSQKVG…NINRAMTILQ (1517 aa). Residues 579–599 are amphipathic alpha-helix; sequence GLGDLIEGVVEGVTRNALTPL. A compositionally biased stretch (polar residues) spans 597 to 613; that stretch reads TPLTPANNLPDTQSSGP. Disordered regions lie at residues 597–620 and 628–647; these read TPLT…KETP and GATN…VIQK. Catalysis depends on for protease 2A activity residues H899 and D917. Zn(2+) contacts are provided by C934 and C936. The For protease 2A activity role is filled by C988. C994 and H996 together coordinate Zn(2+). Residues 1126 to 1198 form a membrane-binding region; sequence GDSWLKKFTE…HQSCPSQEHQ (73 aa). Residues 1126-1264 form an oligomerization region; sequence GDSWLKKFTE…SPGTGKSVAT (139 aa). The tract at residues 1147–1151 is RNA-binding; that stretch reads SNKIS. One can recognise an SF3 helicase domain in the interval 1230 to 1386; the sequence is EHTINNYVQF…SEYSRDGKLN (157 aa). Position 1254-1261 (1254-1261) interacts with ATP; sequence GSPGTGKS. Zn(2+)-binding residues include C1394, C1397, C1406, and C1411. The C4-type zinc finger occupies 1394–1411; that stretch reads CKNCHHPANFKRCCPLVC. Residues 1438-1445 are RNA-binding; the sequence is ERNRRSSI. Residues 1449–1454 are oligomerization; the sequence is MEALFQ. Residues 1519-1534 lie within the membrane without spanning it; sequence AVTTFAAVAGVVYVMY. The Cytoplasmic portion of the chain corresponds to 1535 to 2207; that stretch reads KLFAGHQGAY…TLYRRWLDSF (673 aa). An O-(5'-phospho-RNA)-tyrosine modification is found at Y1544. The 179-residue stretch at 1564–1742 folds into the Peptidase C3 domain; the sequence is GPGFDYAVAM…FAAALKRSYF (179 aa). Residues H1603, E1634, and C1710 each act as for protease 3C activity in the active site. A RdRp catalytic domain is found at 1973–2088; sequence EKLFAFDYTG…SYPHEVDASL (116 aa). Mg(2+) is bound by residues D1979 and D2074.

The protein belongs to the picornaviruses polyprotein family. Interacts with capsid protein VP1 and capsid protein VP3 to form heterotrimeric protomers. In terms of assembly, interacts with capsid protein VP0, and capsid protein VP3 to form heterotrimeric protomers. Interacts with human PVR. Five protomers subsequently associate to form pentamers which serve as building blocks for the capsid. Interacts with capsid protein VP2, capsid protein VP3 and capsid protein VP4 following cleavage of capsid protein VP0. As to quaternary structure, interacts with capsid protein VP1 and capsid protein VP3 in the mature capsid. Interacts with capsid protein VP0 and capsid protein VP1 to form heterotrimeric protomers. Five protomers subsequently associate to form pentamers which serve as building blocks for the capsid. Interacts with capsid protein VP4 in the mature capsid. Interacts with protein 2C; this interaction may be important for virion morphogenesis. In terms of assembly, interacts with capsid protein VP1 and capsid protein VP3. As to quaternary structure, homodimer. Homohexamer; forms a hexameric ring structure with 6-fold symmetry characteristic of AAA+ ATPases. Interacts (via N-terminus) with host RTN3 (via reticulon domain); this interaction is important for viral replication. Interacts with capsid protein VP3; this interaction may be important for virion morphogenesis. In terms of assembly, interacts with protein 3CD. As to quaternary structure, homodimer. Interacts with host GBF1. Interacts (via GOLD domain) with host ACBD3 (via GOLD domain); this interaction allows the formation of a viral protein 3A/ACBD3 heterotetramer with a 2:2 stoichiometry, which will stimulate the recruitment of host PI4KB in order to synthesize PI4P at the viral RNA replication sites. Interacts with RNA-directed RNA polymerase. In terms of assembly, interacts with protein 3AB and with RNA-directed RNA polymerase. As to quaternary structure, interacts with Viral protein genome-linked and with protein 3CD. The cofactor is Mg(2+). Specific enzymatic cleavages in vivo by the viral proteases yield processing intermediates and the mature proteins. Post-translationally, myristoylation is required for the formation of pentamers during virus assembly. Further assembly of 12 pentamers and a molecule of genomic RNA generates the provirion. In terms of processing, during virion maturation, immature virions are rendered infectious following cleavage of VP0 into VP4 and VP2. This maturation seems to be an autocatalytic event triggered by the presence of RNA in the capsid and it is followed by a conformational change infectious virion. Myristoylation is required during RNA encapsidation and formation of the mature virus particle. Post-translationally, VPg is uridylylated by the polymerase into VPg-pUpU. This acts as a nucleotide-peptide primer for the genomic RNA replication.

It localises to the virion. The protein localises to the host cytoplasm. The protein resides in the host cytoplasmic vesicle membrane. Its subcellular location is the host nucleus. The catalysed reaction is a ribonucleoside 5'-triphosphate + H2O = a ribonucleoside 5'-diphosphate + phosphate + H(+). It catalyses the reaction Selective cleavage of Tyr-|-Gly bond in the picornavirus polyprotein.. It carries out the reaction RNA(n) + a ribonucleoside 5'-triphosphate = RNA(n+1) + diphosphate. The enzyme catalyses Selective cleavage of Gln-|-Gly bond in the poliovirus polyprotein. In other picornavirus reactions Glu may be substituted for Gln, and Ser or Thr for Gly.. Its activity is regulated as follows. Replication or transcription is subject to high level of random mutations by the nucleotide analog ribavirin. Its function is as follows. Forms an icosahedral capsid of pseudo T=3 symmetry with capsid proteins VP2 and VP3. The capsid is 300 Angstroms in diameter, composed of 60 copies of each capsid protein and enclosing the viral positive strand RNA genome. Capsid protein VP1 mainly forms the vertices of the capsid. Capsid protein VP1 interacts with host cell receptor PVR to provide virion attachment to target host cells. This attachment induces virion internalization predominantly through clathrin- and caveolin-independent endocytosis in Hela cells and through caveolin-mediated endocytosis in brain microvascular endothelial cells. Tyrosine kinases are probably involved in the entry process. Virus binding to PVR induces increased junctional permeability and rearrangement of junctional proteins. Modulation of endothelial tight junctions, as well as cytolytic infection of endothelial cells themselves, may result in loss of endothelial integrity which may help the virus to reach the CNS. After binding to its receptor, the capsid undergoes conformational changes. Capsid protein VP1 N-terminus (that contains an amphipathic alpha-helix) and capsid protein VP4 are externalized. Together, they shape a pore in the host membrane through which viral genome is translocated to host cell cytoplasm. In terms of biological role, forms an icosahedral capsid of pseudo T=3 symmetry with capsid proteins VP2 and VP3. The capsid is 300 Angstroms in diameter, composed of 60 copies of each capsid protein and enclosing the viral positive strand RNA genome. Lies on the inner surface of the capsid shell. After binding to the host receptor, the capsid undergoes conformational changes. Capsid protein VP4 is released, Capsid protein VP1 N-terminus is externalized, and together, they shape a pore in the host membrane through which the viral genome is translocated into the host cell cytoplasm. Functionally, component of immature procapsids, which is cleaved into capsid proteins VP4 and VP2 after maturation. Allows the capsid to remain inactive before the maturation step. Its function is as follows. Cysteine protease that cleaves viral polyprotein and specific host proteins. It is responsible for the autocatalytic cleavage between the P1 and P2 regions, which is the first cleavage occurring in the polyprotein. Also cleaves the host translation initiation factor EIF4G1, in order to shut down the capped cellular mRNA translation. Inhibits the host nucleus-cytoplasm protein and RNA trafficking by cleaving host members of the nuclear pores including NUP98, NUP62 and NUP153. Counteracts stress granule formation probably by antagonizing its assembly or promoting its dissassembly. Cleaves and inhibits host IFIH1/MDA5, thereby inhibiting the type-I IFN production and the establishment of the antiviral state. Cleaves and inhibits host MAVS, thereby inhibiting the type-I IFN production and the establishment of the antiviral state. In terms of biological role, plays an essential role in the virus replication cycle by acting as a viroporin. Creates a pore in the host endoplasmic reticulum and as a consequence releases Ca2+ in the cytoplasm of infected cell. In turn, high levels of cytoplasmic calcium may trigger membrane trafficking and transport of viral ER-associated proteins to viroplasms, sites of viral genome replication. Induces and associates with structural rearrangements of intracellular membranes. Displays RNA-binding, nucleotide binding and NTPase activities. May play a role in virion morphogenesis and viral RNA encapsidation by interacting with the capsid protein VP3. Functionally, localizes the viral replication complex to the surface of membranous vesicles. Together with protein 3CD binds the Cis-Active RNA Element (CRE) which is involved in RNA synthesis initiation. Acts as a cofactor to stimulate the activity of 3D polymerase, maybe through a nucleid acid chaperone activity. Its function is as follows. Localizes the viral replication complex to the surface of membranous vesicles. It inhibits host cell endoplasmic reticulum-to-Golgi apparatus transport and causes the disassembly of the Golgi complex, possibly through GBF1 interaction. This would result in depletion of MHC, trail receptors and IFN receptors at the host cell surface. Plays an essential role in viral RNA replication by recruiting ACBD3 and PI4KB at the viral replication sites, thereby allowing the formation of the rearranged membranous structures where viral replication takes place. In terms of biological role, acts as a primer for viral RNA replication and remains covalently bound to viral genomic RNA. VPg is uridylylated prior to priming replication into VPg-pUpU. The oriI viral genomic sequence may act as a template for this. The VPg-pUpU is then used as primer on the genomic RNA poly(A) by the RNA-dependent RNA polymerase to replicate the viral genome. During genome replication, the VPg-RNA linkage is removed by the host TDP2, thereby accelerating replication. During the late stage of the replication cycle, host TDP2 is excluded from sites of viral RNA synthesis and encapsidation, allowing for the generation of progeny virions. Involved in the viral replication complex and viral polypeptide maturation. It exhibits protease activity with a specificity and catalytic efficiency that is different from protease 3C. Protein 3CD lacks polymerase activity. Protein 3CD binds to the 5'UTR of the viral genome. Functionally, major viral protease that mediates proteolytic processing of the polyprotein. Cleaves host EIF5B, contributing to host translation shutoff. Also cleaves host PABPC1, contributing to host translation shutoff. Cleaves host RIGI and thus contributes to the inhibition of type I interferon production. Cleaves host NLRP1, triggers host N-glycine-mediated degradation of the autoinhibitory NLRP1 N-terminal fragment. Inhibits the integrated stress response (ISR) in the infected cell by cleaving host G3BP1. Stress granule formation is thus inhibited, which allows protein synthesis and viral replication. Its function is as follows. Replicates the viral genomic RNA on the surface of intracellular membranes. May form linear arrays of subunits that propagate along a strong head-to-tail interaction called interface-I. Covalently attaches UMP to a tyrosine of VPg, which is used to prime RNA synthesis. The positive stranded RNA genome is first replicated at virus induced membranous vesicles, creating a dsRNA genomic replication form. This dsRNA is then used as template to synthesize positive stranded RNA genomes. ss(+)RNA genomes are either translated, replicated or encapsidated. The chain is Genome polyprotein from Homo sapiens (Human).